The primary structure comprises 254 residues: Proteasome activator complex subunit 3 (254 aa).

An N-acetylalanine modification is found at A2. Residues S17 and S24 each carry the phosphoserine modification. K195 bears the N6-acetyllysine; by P300/CBP mark. A Phosphoserine; by CHEK2 modification is found at S247.

Belongs to the PA28 family. Homoheptamer; the stability of the heptamer is essential for the specific activation of the trypsine-like subunit and inhibition of the chymotrypsin-like and postglutamyl-preferring (PGPH) subunits of the proteasome. Interacts with p53/TP53 and MDM2. Interacts with MAP3K3. Associates with the proteasome. Interacts with CCAR2. Interacts with PSME3IP1 (via C-terminus); the interaction is direct and promotes the association of PSME3 with the 20S proteasome. Interacts with COIL; the interaction is inhibited by PSME3IP1. As to quaternary structure, (Microbial infection) Interacts with human cytomegalovirus UL27. In terms of processing, phosphorylated by MAP3K3. Phosphorylation at Ser-247 promotes its association with CCAR2. Acetylation at the major site Lys-195 is important for oligomerization and ability to degrade its target substrates. Deacetylated by SIRT1.

The protein resides in the nucleus. It localises to the cytoplasm. Its function is as follows. Subunit of the 11S REG-gamma (also called PA28-gamma) proteasome regulator, a doughnut-shaped homoheptamer which associates with the proteasome. 11S REG-gamma activates the trypsin-like catalytic subunit of the proteasome but inhibits the chymotrypsin-like and postglutamyl-preferring (PGPH) subunits. Facilitates the MDM2-p53/TP53 interaction which promotes ubiquitination- and MDM2-dependent proteasomal degradation of p53/TP53, limiting its accumulation and resulting in inhibited apoptosis after DNA damage. May also be involved in cell cycle regulation. Mediates CCAR2 and CHEK2-dependent SIRT1 inhibition. This Homo sapiens (Human) protein is Proteasome activator complex subunit 3 (PSME3).